An 88-amino-acid chain; its full sequence is Small ribosomal subunit protein uS15 (88 aa).

Over residues 1 to 20 (MLTTQDKQNIIKENQQSEGD) the composition is skewed to polar residues. A disordered region spans residues 1–24 (MLTTQDKQNIIKENQQSEGDTGSP).

It belongs to the universal ribosomal protein uS15 family. Part of the 30S ribosomal subunit. Forms a bridge to the 50S subunit in the 70S ribosome, contacting the 23S rRNA.

In terms of biological role, one of the primary rRNA binding proteins, it binds directly to 16S rRNA where it helps nucleate assembly of the platform of the 30S subunit by binding and bridging several RNA helices of the 16S rRNA. Functionally, forms an intersubunit bridge (bridge B4) with the 23S rRNA of the 50S subunit in the ribosome. The protein is Small ribosomal subunit protein uS15 of Francisella philomiragia subsp. philomiragia (strain ATCC 25017 / CCUG 19701 / FSC 153 / O#319-036).